A 1054-amino-acid chain; its full sequence is Bifunctional glutamine synthetase adenylyltransferase/adenylyl-removing enzyme (1054 aa).

Residues 1–535 are adenylyl removase; it reads MRKTLPSIGA…LHRKLFYRPL (535 aa). Composition is skewed to polar residues over residues 138–150 and 165–175; these read SFSSESQQPQGSD and DTANTDLSTPG. The tract at residues 138–175 is disordered; the sequence is SFSSESQQPQGSDSDSEFSFGADLSADDTANTDLSTPG. Positions 541–1054 are adenylyl transferase; the sequence is NISVGTLKLS…WGVDSIEHDY (514 aa).

Belongs to the GlnE family. Mg(2+) serves as cofactor.

It carries out the reaction [glutamine synthetase]-O(4)-(5'-adenylyl)-L-tyrosine + phosphate = [glutamine synthetase]-L-tyrosine + ADP. It catalyses the reaction [glutamine synthetase]-L-tyrosine + ATP = [glutamine synthetase]-O(4)-(5'-adenylyl)-L-tyrosine + diphosphate. Its function is as follows. Involved in the regulation of glutamine synthetase GlnA, a key enzyme in the process to assimilate ammonia. When cellular nitrogen levels are high, the C-terminal adenylyl transferase (AT) inactivates GlnA by covalent transfer of an adenylyl group from ATP to specific tyrosine residue of GlnA, thus reducing its activity. Conversely, when nitrogen levels are low, the N-terminal adenylyl removase (AR) activates GlnA by removing the adenylyl group by phosphorolysis, increasing its activity. The regulatory region of GlnE binds the signal transduction protein PII (GlnB) which indicates the nitrogen status of the cell. The sequence is that of Bifunctional glutamine synthetase adenylyltransferase/adenylyl-removing enzyme from Corynebacterium diphtheriae (strain ATCC 700971 / NCTC 13129 / Biotype gravis).